Reading from the N-terminus, the 378-residue chain is Decaprenyl-diphosphate synthase subunit 1 (378 aa).

3 residues coordinate isopentenyl diphosphate: lysine 72, arginine 75, and histidine 130. Positions 137 and 141 each coordinate Mg(2+). Arginine 147 contacts isopentenyl diphosphate.

This sequence belongs to the FPP/GGPP synthase family. Heterotetramer of 2 dps1 and 2 dlp1 subunits. Mg(2+) is required as a cofactor.

The protein resides in the mitochondrion. The enzyme catalyses 7 isopentenyl diphosphate + (2E,6E)-farnesyl diphosphate = all-trans-decaprenyl diphosphate + 7 diphosphate. It participates in cofactor biosynthesis; ubiquinone biosynthesis. Supplies decaprenyl diphosphate, the precursor for the side chain of the isoprenoid quinones ubiquinone-10. In Schizosaccharomyces pombe (strain 972 / ATCC 24843) (Fission yeast), this protein is Decaprenyl-diphosphate synthase subunit 1 (dps1).